The primary structure comprises 451 residues: UDP-glycosyltransferase 76C4 (451 aa).

Residues Ser-273, 332–334 (APQ), 349–357 (HNGWNSTVE), and 371–374 (RWDQ) contribute to the UDP-alpha-D-glucose site.

It belongs to the UDP-glycosyltransferase family.

The sequence is that of UDP-glycosyltransferase 76C4 (UGT76C4) from Arabidopsis thaliana (Mouse-ear cress).